The following is a 106-amino-acid chain: Small ribosomal subunit protein bS18 (106 aa).

A disordered region spans residues 1–39 (MNGRNNDMGRNGGADYDDRDFGRTPDLNADAPGRRRTGR).

It belongs to the bacterial ribosomal protein bS18 family. As to quaternary structure, part of the 30S ribosomal subunit. Forms a tight heterodimer with protein bS6.

In terms of biological role, binds as a heterodimer with protein bS6 to the central domain of the 16S rRNA, where it helps stabilize the platform of the 30S subunit. In Sorangium cellulosum (strain So ce56) (Polyangium cellulosum (strain So ce56)), this protein is Small ribosomal subunit protein bS18.